We begin with the raw amino-acid sequence, 435 residues long: Proline--tRNA ligase (435 aa).

This sequence belongs to the class-II aminoacyl-tRNA synthetase family. ProS type 2 subfamily. As to quaternary structure, homodimer.

The protein resides in the cytoplasm. It catalyses the reaction tRNA(Pro) + L-proline + ATP = L-prolyl-tRNA(Pro) + AMP + diphosphate. In terms of biological role, catalyzes the attachment of proline to tRNA(Pro) in a two-step reaction: proline is first activated by ATP to form Pro-AMP and then transferred to the acceptor end of tRNA(Pro). This is Proline--tRNA ligase from Rhodospirillum rubrum (strain ATCC 11170 / ATH 1.1.1 / DSM 467 / LMG 4362 / NCIMB 8255 / S1).